The chain runs to 229 residues: Secretory carrier-associated membrane protein 4 (229 aa).

Topologically, residues Met1–Arg39 are cytoplasmic. A run of 4 helical transmembrane segments spans residues Ile40–Ala60, Trp61–Phe81, Phe105–Gly125, and Val149–Ile169. Topologically, residues Met170–Pro229 are cytoplasmic. Position 194 is a phosphothreonine (Thr194). Residues Phe208 to Pro229 are disordered.

This sequence belongs to the SCAMP family.

It is found in the membrane. Its function is as follows. Probably involved in membrane protein trafficking. The protein is Secretory carrier-associated membrane protein 4 (SCAMP4) of Homo sapiens (Human).